The sequence spans 353 residues: Photosystem II protein D1 (353 aa).

Thr2 carries the post-translational modification N-acetylthreonine. Thr2 is subject to Phosphothreonine. A run of 3 helical transmembrane segments spans residues 29 to 46 (YIGWFGVLMIPTLLTATS), 118 to 133 (HFLLGVACYMGREWEL), and 142 to 156 (WIAIAYSAPVAAATA). His118 lines the chlorophyll a pocket. Tyr126 contacts pheophytin a. [CaMn4O5] cluster is bound by residues Asp170 and Glu189. A helical membrane pass occupies residues 197–218 (FHMLGVAGVFGGSLFSAMHGSL). Position 198 (His198) interacts with chlorophyll a. A quinone contacts are provided by residues His215 and 264 to 265 (SF). His215 contacts Fe cation. His272 serves as a coordination point for Fe cation. The helical transmembrane segment at 274-288 (FLAAWPVIGIWFTAL) threads the bilayer. 4 residues coordinate [CaMn4O5] cluster: His332, Glu333, Asp342, and Ala344. A propeptide spanning residues 345–353 (TFEVSATNA) is cleaved from the precursor.

The protein belongs to the reaction center PufL/M/PsbA/D family. PSII is composed of 1 copy each of membrane proteins PsbA, PsbB, PsbC, PsbD, PsbE, PsbF, PsbH, PsbI, PsbJ, PsbK, PsbL, PsbM, PsbT, PsbX, PsbY, PsbZ, Psb30/Ycf12, at least 3 peripheral proteins of the oxygen-evolving complex and a large number of cofactors. It forms dimeric complexes. The cofactor is The D1/D2 heterodimer binds P680, chlorophylls that are the primary electron donor of PSII, and subsequent electron acceptors. It shares a non-heme iron and each subunit binds pheophytin, quinone, additional chlorophylls, carotenoids and lipids. D1 provides most of the ligands for the Mn4-Ca-O5 cluster of the oxygen-evolving complex (OEC). There is also a Cl(-1) ion associated with D1 and D2, which is required for oxygen evolution. The PSII complex binds additional chlorophylls, carotenoids and specific lipids.. Tyr-161 forms a radical intermediate that is referred to as redox-active TyrZ, YZ or Y-Z. Post-translationally, C-terminally processed by CTPA; processing is essential to allow assembly of the oxygen-evolving complex and thus photosynthetic growth.

Its subcellular location is the plastid membrane. The enzyme catalyses 2 a plastoquinone + 4 hnu + 2 H2O = 2 a plastoquinol + O2. In terms of biological role, photosystem II (PSII) is a light-driven water:plastoquinone oxidoreductase that uses light energy to abstract electrons from H(2)O, generating O(2) and a proton gradient subsequently used for ATP formation. It consists of a core antenna complex that captures photons, and an electron transfer chain that converts photonic excitation into a charge separation. The D1/D2 (PsbA/PsbD) reaction center heterodimer binds P680, the primary electron donor of PSII as well as several subsequent electron acceptors. This is Photosystem II protein D1 from Cuscuta gronovii (Common dodder).